The chain runs to 455 residues: MPLRLLLLLLWLWGLSLQRAETDSEGQTTGELYQRWERYGWECQNTLEATEPPSGLACNGSFDMYACWNYTAANTTARVSCPWYLPWYRQVAAGFVFRQCGSDGQWGSWRDHTQCENPEKNGAFQDQKLILERLQVVYTVGYSLSLATLLLALLILSLFRRLHCTRNYIHMNLFTSFMLRAGAILTRDQLLPPLGPYTGNQTPTLWNQALAACRTAQILTQYCVGANYTWLLVEGVYLHHLLVVVRRSEKGHFRCYLLLGWGAPALFVIPWVIVRYLYENTQCWERNEVKAIWWIIRTPILITILINFLIFIRILGILVSKLRTRQMRCPDYRLRLARSTLTLMPLLGVHEVVFAPVTEEQAEGSLRFAKLAFEIFLSSFQGFLVSVLYCFINKEVQSEIRRLRLSLQEQCPRPHLGQAPRAVPLSSAPQEAAIRNALPSGMLHVPGDEVLESYC.

Positions Met1–Gln18 are cleaved as a signal peptide. Residues Arg19–Gln135 lie on the Extracellular side of the membrane. 3 disulfides stabilise this stretch: Cys43–Cys67, Cys58–Cys100, and Cys81–Cys115. N-linked (GlcNAc...) asparagine glycans are attached at residues Asn59, Asn69, and Asn74. The chain crosses the membrane as a helical span at residues Val136–Leu158. The Cytoplasmic portion of the chain corresponds to Phe159 to Arg166. The chain crosses the membrane as a helical span at residues Asn167–Thr186. Topologically, residues Arg187–Arg214 are extracellular. The chain crosses the membrane as a helical span at residues Thr215–His239. At His240–Gly251 the chain is on the cytoplasmic side. A helical transmembrane segment spans residues His252–Arg275. The Extracellular segment spans residues Tyr276–Lys290. A helical transmembrane segment spans residues Ala291–Gly316. At Ile317–Arg338 the chain is on the cytoplasmic side. The helical transmembrane segment at Ser339–Glu359 threads the bilayer. The Extracellular segment spans residues Glu360 to Glu374. A helical membrane pass occupies residues Ile375–Glu395. At Val396–Cys455 the chain is on the cytoplasmic side.

Belongs to the G-protein coupled receptor 2 family. May form homodimers and heterodimers with GLP1R. N-glycosylation is required for cell surface expression and lengthens receptor half-life by preventing degradation in the ER. In terms of tissue distribution, present in the pancreas as well as the gut, adipose tissue, heart, pituitary, and inner layers of the adrenal cortex, whereas it is not found in kidney, spleen, or liver. It is also expressed in several brain regions, including the cerebral cortex, hippocampus, and olfactory bulb.

The protein resides in the cell membrane. Functionally, this is a receptor for GIP. The activity of this receptor is mediated by G proteins which activate adenylyl cyclase. The protein is Gastric inhibitory polypeptide receptor (Gipr) of Rattus norvegicus (Rat).